A 94-amino-acid polypeptide reads, in one-letter code: Large ribosomal subunit protein uL23 (94 aa).

The protein belongs to the universal ribosomal protein uL23 family. In terms of assembly, part of the 50S ribosomal subunit. Contacts protein L29, and trigger factor when it is bound to the ribosome.

One of the early assembly proteins it binds 23S rRNA. One of the proteins that surrounds the polypeptide exit tunnel on the outside of the ribosome. Forms the main docking site for trigger factor binding to the ribosome. This chain is Large ribosomal subunit protein uL23, found in Dehalococcoides mccartyi (strain ATCC BAA-2100 / JCM 16839 / KCTC 5957 / BAV1).